The chain runs to 344 residues: GDSL esterase/lipase At2g19010 (344 aa).

The first 21 residues, 1 to 21 (MSKACWLVAAIIFTAATVVYG), serve as a signal peptide directing secretion. The Nucleophile role is filled by S33. A glycan (N-linked (GlcNAc...) asparagine) is linked at N303. Active-site residues include D311 and H314.

Belongs to the 'GDSL' lipolytic enzyme family.

The protein resides in the secreted. This is GDSL esterase/lipase At2g19010 from Arabidopsis thaliana (Mouse-ear cress).